The chain runs to 751 residues: Leucine-rich repeat-containing protein 56 homolog (751 aa).

A disordered region spans residues 1–149 (MKKSTVLDAR…IDKSRDNGQL (149 aa)). A compositionally biased stretch (pro residues) spans 13–22 (GPLPRRPQQP). 2 stretches are compositionally biased toward polar residues: residues 28–39 (RNSSQVEKNNAR) and 60–87 (HSQS…NLNS). 5 LRR repeats span residues 210–235 (MPQL…NYAN), 236–256 (LRRL…GACA), 258–279 (VLEE…TEVS), 280–304 (STLQ…TLPQ), and 307–328 (KMKH…VELS). 3 disordered regions span residues 430 to 538 (SRSH…QRQQ), 645 to 698 (TCTH…EKDW), and 717 to 751 (EAAL…PVVF). 2 stretches are compositionally biased toward polar residues: residues 456 to 471 (KNSQ…TNQG) and 662 to 671 (QQEQPTTAGA). Residues 717–738 (EAALKERVQGSKEVDGGGLEKV) show a composition bias toward basic and acidic residues. Residues 739–751 (ESEDEEDVSPVVF) show a composition bias toward acidic residues.

The protein belongs to the LRRC56 family.

Its subcellular location is the cell projection. It localises to the cilium. It is found in the flagellum. Functionally, required for the assembly of dynein arms in the distal portion of flagellum axoneme. This Trypanosoma brucei brucei (strain 927/4 GUTat10.1) protein is Leucine-rich repeat-containing protein 56 homolog.